The sequence spans 33 residues: Dermonecrotic toxin LiSicTox-alphaI-1 (33 aa).

Mg(2+) is bound at residue Glu-32.

The protein belongs to the arthropod phospholipase D family. Class II subfamily. It depends on Mg(2+) as a cofactor. Post-translationally, contains 2 disulfide bonds. As to expression, expressed by the venom gland.

Its subcellular location is the secreted. It catalyses the reaction an N-(acyl)-sphingosylphosphocholine = an N-(acyl)-sphingosyl-1,3-cyclic phosphate + choline. The enzyme catalyses an N-(acyl)-sphingosylphosphoethanolamine = an N-(acyl)-sphingosyl-1,3-cyclic phosphate + ethanolamine. It carries out the reaction a 1-acyl-sn-glycero-3-phosphocholine = a 1-acyl-sn-glycero-2,3-cyclic phosphate + choline. The catalysed reaction is a 1-acyl-sn-glycero-3-phosphoethanolamine = a 1-acyl-sn-glycero-2,3-cyclic phosphate + ethanolamine. Its function is as follows. Dermonecrotic toxins cleave the phosphodiester linkage between the phosphate and headgroup of certain phospholipids (sphingolipid and lysolipid substrates), forming an alcohol (often choline) and a cyclic phosphate. This toxin acts on sphingomyelin (SM). It may also act on ceramide phosphoethanolamine (CPE), lysophosphatidylcholine (LPC) and lysophosphatidylethanolamine (LPE), but not on lysophosphatidylserine (LPS), and lysophosphatidylglycerol (LPG). It acts by transphosphatidylation, releasing exclusively cyclic phosphate products as second products. In vivo, intradermal injection induces dermonecrosis. Induces hemolysis, increased vascular permeability, edema, inflammatory response, and platelet aggregation. This is Dermonecrotic toxin LiSicTox-alphaI-1 from Loxosceles intermedia (Brown spider).